The primary structure comprises 246 residues: Small ribosomal subunit protein uS2 (246 aa).

The protein belongs to the universal ribosomal protein uS2 family.

The sequence is that of Small ribosomal subunit protein uS2 from Burkholderia cenocepacia (strain ATCC BAA-245 / DSM 16553 / LMG 16656 / NCTC 13227 / J2315 / CF5610) (Burkholderia cepacia (strain J2315)).